The sequence spans 331 residues: Ferrochelatase (331 aa).

Positions 187 and 286 each coordinate Fe cation.

This sequence belongs to the ferrochelatase family.

The protein localises to the cytoplasm. The enzyme catalyses heme b + 2 H(+) = protoporphyrin IX + Fe(2+). Its pathway is porphyrin-containing compound metabolism; protoheme biosynthesis; protoheme from protoporphyrin-IX: step 1/1. Its function is as follows. Catalyzes the ferrous insertion into protoporphyrin IX. The polypeptide is Ferrochelatase (Legionella pneumophila (strain Paris)).